The primary structure comprises 22 residues: Caerin-3.1 (22 aa).

At Lys22 the chain carries Lysine amide.

Belongs to the frog skin active peptide (FSAP) family. Caerin subfamily. Expressed by the skin dorsal glands.

The protein resides in the secreted. Antibacterial peptide with narrow spectrum of activity. Inhibits the formation of NO by neuronal nitric oxide synthase. This Litoria rothii (Roth's tree frog) protein is Caerin-3.1.